Consider the following 331-residue polypeptide: CRISPR-associated endonuclease Cas1 1 (331 aa).

The Mn(2+) site is built by E161, H226, and E241.

The protein belongs to the CRISPR-associated endonuclease Cas1 family. As to quaternary structure, homodimer, forms a heterotetramer with a Cas2 homodimer. Mg(2+) is required as a cofactor. It depends on Mn(2+) as a cofactor.

In terms of biological role, CRISPR (clustered regularly interspaced short palindromic repeat), is an adaptive immune system that provides protection against mobile genetic elements (viruses, transposable elements and conjugative plasmids). CRISPR clusters contain spacers, sequences complementary to antecedent mobile elements, and target invading nucleic acids. CRISPR clusters are transcribed and processed into CRISPR RNA (crRNA). Acts as a dsDNA endonuclease. Involved in the integration of spacer DNA into the CRISPR cassette. The polypeptide is CRISPR-associated endonuclease Cas1 1 (Methanospirillum hungatei JF-1 (strain ATCC 27890 / DSM 864 / NBRC 100397 / JF-1)).